Reading from the N-terminus, the 183-residue chain is Interleukin-36 beta (183 aa).

Residues 1-30 constitute a propeptide that is removed on maturation; sequence MMAFPPQSCVHVLPPKSIQMWEPNHNTMHG.

Belongs to the IL-1 family. As to quaternary structure, interacts with cargo receptor TMED10; the interaction mediates the translocation from the cytoplasm into the ERGIC (endoplasmic reticulum-Golgi intermediate compartment) and thereby secretion. N-terminal truncation leads to a dramatic enhancement of its activity (&gt;1000-fold).

Its subcellular location is the cytoplasm. The protein localises to the secreted. Functionally, cytokine that binds to and signals through the IL1RL2/IL-36R receptor which in turn activates NF-kappa-B and MAPK signaling pathways in target cells linked to a pro-inflammatory response. Part of the IL-36 signaling system that is thought to be present in epithelial barriers and to take part in local inflammatory response; similar to the IL-1 system with which it shares the coreceptor IL1RAP. Stimulates production of interleukin-6 and interleukin-8 in synovial fibrobasts, articular chondrocytes and mature adipocytes. Induces expression of a number of antimicrobial peptides including beta-defensin 4 and beta-defensin 103 as well as a number of matrix metalloproteases. Seems to be involved in skin inflammatory response by acting on keratinocytes, dendritic cells and indirectly on T-cells to drive tissue infiltration, cell maturation and cell proliferation. Induces the production of pro-inflammatory cytokines in bone marrow-derived dendritic cells (BMDCs), including IL-12, Il-1 beta, IL-6, TNF-alpha and IL-23, and activates p38 MAPK phosphorylation in BMDCs. Involved in dendritic cell maturation by stimulating the surface expression of CD80, CD86 and MHC class II. Induces the production of IFN-gamma, IL-4 and IL-17 by T-helper 1 (Th1) cells, cultured CD4(+) T-cells and splenocytes. In Mus musculus (Mouse), this protein is Interleukin-36 beta.